We begin with the raw amino-acid sequence, 380 residues long: Queuine tRNA-ribosyltransferase (380 aa).

Catalysis depends on Asp-96, which acts as the Proton acceptor. Residues 96 to 100 (DSGGF), Asp-150, Gln-193, and Gly-220 contribute to the substrate site. Residues 251-257 (GVGAPDS) form an RNA binding region. Catalysis depends on Asp-270, which acts as the Nucleophile. The segment at 275–279 (TRIAR) is RNA binding; important for wobble base 34 recognition. Zn(2+)-binding residues include Cys-308, Cys-310, Cys-313, and His-339.

The protein belongs to the queuine tRNA-ribosyltransferase family. Homodimer. Within each dimer, one monomer is responsible for RNA recognition and catalysis, while the other monomer binds to the replacement base PreQ1. The cofactor is Zn(2+).

The enzyme catalyses 7-aminomethyl-7-carbaguanine + guanosine(34) in tRNA = 7-aminomethyl-7-carbaguanosine(34) in tRNA + guanine. The protein operates within tRNA modification; tRNA-queuosine biosynthesis. Catalyzes the base-exchange of a guanine (G) residue with the queuine precursor 7-aminomethyl-7-deazaguanine (PreQ1) at position 34 (anticodon wobble position) in tRNAs with GU(N) anticodons (tRNA-Asp, -Asn, -His and -Tyr). Catalysis occurs through a double-displacement mechanism. The nucleophile active site attacks the C1' of nucleotide 34 to detach the guanine base from the RNA, forming a covalent enzyme-RNA intermediate. The proton acceptor active site deprotonates the incoming PreQ1, allowing a nucleophilic attack on the C1' of the ribose to form the product. After dissociation, two additional enzymatic reactions on the tRNA convert PreQ1 to queuine (Q), resulting in the hypermodified nucleoside queuosine (7-(((4,5-cis-dihydroxy-2-cyclopenten-1-yl)amino)methyl)-7-deazaguanosine). The chain is Queuine tRNA-ribosyltransferase from Streptococcus equi subsp. equi (strain 4047).